The chain runs to 308 residues: Ribosomal protein uL3 glutamine methyltransferase (308 aa).

The protein belongs to the protein N5-glutamine methyltransferase family. PrmB subfamily.

The catalysed reaction is L-glutaminyl-[ribosomal protein uL3] + S-adenosyl-L-methionine = N(5)-methyl-L-glutaminyl-[ribosomal protein uL3] + S-adenosyl-L-homocysteine + H(+). Methylates large ribosomal subunit protein uL3 on a specific glutamine residue. The polypeptide is Ribosomal protein uL3 glutamine methyltransferase (Xanthomonas campestris pv. campestris (strain ATCC 33913 / DSM 3586 / NCPPB 528 / LMG 568 / P 25)).